The following is a 418-amino-acid chain: Hydroxysteroid dehydrogenase-like protein 2 (418 aa).

Residues 17-23 (GASRGIG), lysine 42, and aspartate 74 contribute to the NADP(+) site. The residue at position 42 (lysine 42) is an N6-(2-hydroxyisobutyryl)lysine. N6-acetyllysine is present on lysine 116. Residue tyrosine 168 is the Proton acceptor of the active site. Lysine 172 contacts NADP(+). The disordered stretch occupies residues 287–310 (STGAVPEFKEEKPQPQPKPRSGAV). Residues 306–415 (RSGAVEETFR…KLEKLMNQMN (110 aa)) form the SCP2 domain. Lysine 318 is subject to N6-succinyllysine.

This sequence belongs to the short-chain dehydrogenases/reductases (SDR) family.

The protein resides in the peroxisome. It localises to the mitochondrion. Its function is as follows. Has apparently no steroid dehydrogenase activity. Controls bile acid (BA) and lipid metabolism in response to nutritional cues. The protein is Hydroxysteroid dehydrogenase-like protein 2 (HSDL2) of Pongo abelii (Sumatran orangutan).